The sequence spans 157 residues: Vesicle transport protein SFT2B (157 aa).

At M1 the chain carries N-acetylmethionine. Topologically, residues 1 to 36 (MDKLKKVLSGQDTEDRSGLSEVVESSSLSWSTRIKG) are cytoplasmic. A Phosphoserine modification is found at S9. Residues 37–57 (FIVCFALGILCSLLGTLLLWV) traverse the membrane as a helical segment. Residues 58-61 (SRKG) are Lumenal-facing. Residues 62 to 82 (LFAVFYTLGNITSIGSTMFLM) form a helical membrane-spanning segment. At 83-96 (GPLKQLKRMFEPTR) the chain is on the cytoplasmic side. A helical transmembrane segment spans residues 97-117 (LIATILVLLFFVLTLCSAFLW). Over 118–120 (NKG) the chain is Lumenal. Residues 121–141 (LALIFCILQSLALTWYSLSYI) traverse the membrane as a helical segment. Topologically, residues 142–157 (PYARDAVKKCFAVCLT) are cytoplasmic.

It belongs to the SFT2 family.

The protein resides in the membrane. Its function is as follows. May be involved in fusion of retrograde transport vesicles derived from an endocytic compartment with the Golgi complex. In Rattus norvegicus (Rat), this protein is Vesicle transport protein SFT2B.